Reading from the N-terminus, the 321-residue chain is Lipoyl synthase (321 aa).

[4Fe-4S] cluster contacts are provided by C68, C73, C79, C94, C98, C101, and S308. A Radical SAM core domain is found at 80-297 (FNHGTATFMI…KAEALAMGFT (218 aa)).

Belongs to the radical SAM superfamily. Lipoyl synthase family. [4Fe-4S] cluster is required as a cofactor.

It localises to the cytoplasm. It catalyses the reaction [[Fe-S] cluster scaffold protein carrying a second [4Fe-4S](2+) cluster] + N(6)-octanoyl-L-lysyl-[protein] + 2 oxidized [2Fe-2S]-[ferredoxin] + 2 S-adenosyl-L-methionine + 4 H(+) = [[Fe-S] cluster scaffold protein] + N(6)-[(R)-dihydrolipoyl]-L-lysyl-[protein] + 4 Fe(3+) + 2 hydrogen sulfide + 2 5'-deoxyadenosine + 2 L-methionine + 2 reduced [2Fe-2S]-[ferredoxin]. It functions in the pathway protein modification; protein lipoylation via endogenous pathway; protein N(6)-(lipoyl)lysine from octanoyl-[acyl-carrier-protein]: step 2/2. Functionally, catalyzes the radical-mediated insertion of two sulfur atoms into the C-6 and C-8 positions of the octanoyl moiety bound to the lipoyl domains of lipoate-dependent enzymes, thereby converting the octanoylated domains into lipoylated derivatives. The protein is Lipoyl synthase of Escherichia coli O9:H4 (strain HS).